A 331-amino-acid chain; its full sequence is ABSCISIC ACID-INSENSITIVE 5-like protein 1 (331 aa).

Serine 40 and serine 98 each carry phosphoserine. A Phosphothreonine modification is found at threonine 143. Positions 247–310 (MERRQRRMIK…RQEIISRSKQ (64 aa)) constitute a bZIP domain. A basic motif region spans residues 249–268 (RRQRRMIKNRESAARSRARR). A leucine-zipper region spans residues 275–289 (LELELNNLTEENTKL). A compositionally biased stretch (basic and acidic residues) spans 296-320 (NEKKRRQEIISRSKQVTKEKSGDKL). The tract at residues 296-331 (NEKKRRQEIISRSKQVTKEKSGDKLRKIRRMASAGW) is disordered.

It belongs to the bZIP family. ABI5 subfamily. DNA-binding heterodimer with AREB3/DPBF3 or EEL/DPBF4. Interacts with the AFP proteins AFP1, AFP2 and AFP3. Predominantly expressed in seeds.

The protein resides in the nucleus. Functionally, could participate in abscisic acid-regulated gene expression during seed development. The chain is ABSCISIC ACID-INSENSITIVE 5-like protein 1 (DPBF2) from Arabidopsis thaliana (Mouse-ear cress).